The sequence spans 270 residues: NAD(P)H-hydrate epimerase (270 aa).

The YjeF N-terminal domain occupies 25-234 (FQQLMDLMQN…DLLAPEAIYQ (210 aa)). Residue 73-77 (DNGGQ) coordinates (6S)-NADPHX. Residues Asn74 and Asp144 each contribute to the K(+) site. Residues 148–154 (GVGLYGH) and Glu177 each bind (6S)-NADPHX. Position 180 (Thr180) interacts with K(+).

It belongs to the NnrE/AIBP family. K(+) is required as a cofactor.

The enzyme catalyses (6R)-NADHX = (6S)-NADHX. The catalysed reaction is (6R)-NADPHX = (6S)-NADPHX. Its function is as follows. Catalyzes the epimerization of the S- and R-forms of NAD(P)HX, a damaged form of NAD(P)H that is a result of enzymatic or heat-dependent hydration. This is a prerequisite for the S-specific NAD(P)H-hydrate dehydratase to allow the repair of both epimers of NAD(P)HX. This Legionella pneumophila serogroup 1 (strain 2300/99 Alcoy) protein is NAD(P)H-hydrate epimerase.